Here is a 764-residue protein sequence, read N- to C-terminus: FHF complex subunit HOOK interacting protein 2A (764 aa).

The segment at 190–236 (SEDGPKGQDPGSGDVSQCQQPQELSGATGVEPTESEEEPPHQMDDLS) is disordered. Residues 203–214 (DVSQCQQPQELS) show a composition bias toward polar residues.

This sequence belongs to the FHIP family.

Its function is as follows. May be required for proper functioning of the nervous system. The protein is FHF complex subunit HOOK interacting protein 2A of Mus musculus (Mouse).